The primary structure comprises 451 residues: Probable beta-1,4-xylosyltransferase GT43E (451 aa).

Residues Met-1–Arg-88 lie on the Cytoplasmic side of the membrane. Residues Leu-89–Phe-109 form a helical; Signal-anchor for type II membrane protein membrane-spanning segment. The Lumenal segment spans residues Ser-110 to Thr-451. Residues Asn-260 and Asn-366 are each glycosylated (N-linked (GlcNAc...) asparagine).

Belongs to the glycosyltransferase 43 family.

The protein localises to the golgi apparatus membrane. In terms of biological role, probable beta-1,4-xylosyltransferase involved in xylan biosynthesis in cell walls. The protein is Probable beta-1,4-xylosyltransferase GT43E of Oryza sativa subsp. japonica (Rice).